Here is a 327-residue protein sequence, read N- to C-terminus: Urease accessory protein 4 (327 aa).

N120 carries N-linked (GlcNAc...) asparagine glycosylation. The helical transmembrane segment at 239–259 threads the bilayer; it reads VYATVLIIGPHLTTLFSYLAY.

This sequence belongs to the UreD family. URE4, URE6 and URE7 may form a complex that acts as a GTP-hydrolysis-dependent molecular chaperone, activating the urease apoprotein URE1.

It localises to the membrane. Functionally, urease accessory protein required for the maturation and activation of urease via the functional incorporation of the urease nickel metallocenter. Plays a role in host brain invasion. The polypeptide is Urease accessory protein 4 (Cryptococcus neoformans var. grubii serotype A (strain H99 / ATCC 208821 / CBS 10515 / FGSC 9487) (Filobasidiella neoformans var. grubii)).